The sequence spans 341 residues: 4-hydroxy-2-oxovalerate aldolase (341 aa).

The region spanning 9-259 is the Pyruvate carboxyltransferase domain; it reads VRITEVCLRD…KLDIDLYKMM (251 aa). 17–18 is a substrate binding site; sequence RD. Mn(2+) is bound at residue Asp18. His21 (proton acceptor) is an active-site residue. Substrate-binding residues include Ser171 and His198. The Mn(2+) site is built by His198 and His200. Tyr289 serves as a coordination point for substrate.

This sequence belongs to the 4-hydroxy-2-oxovalerate aldolase family.

The catalysed reaction is (S)-4-hydroxy-2-oxopentanoate = acetaldehyde + pyruvate. The polypeptide is 4-hydroxy-2-oxovalerate aldolase (Bacillus thuringiensis (strain Al Hakam)).